Consider the following 77-residue polypeptide: Dermatoxin-B1 (77 aa).

An N-terminal signal peptide occupies residues 1 to 22 (MAFLKKSLFLVLFLGLVPLSLC). A propeptide spanning residues 23–42 (ESEKREGENEEEQEDDQSEE) is cleaved from the precursor. Residues 24–45 (SEKREGENEEEQEDDQSEEKRS) are disordered. The span at 30–40 (ENEEEQEDDQS) shows a compositional bias: acidic residues. At glutamine 76 the chain carries Glutamine amide.

This sequence belongs to the frog skin active peptide (FSAP) family. Dermatoxin subfamily. As to expression, highest expression in skin and to a lesser extent in brain and intestine.

It is found in the secreted. It localises to the target cell membrane. Functionally, possesses a potent antimicrobial activity against Gram-positive bacteria B.megaterium, C.glutamicum and S.aureus and mollicutes A.laidlawii and S.melliferum. Less active against Gram-negative bacteria B.cepacia, P.aeruginosa, S.typhimurium and S.meliloti. Probably acts by disturbing membrane functions with its amphipathic structure. In Phyllomedusa bicolor (Two-colored leaf frog), this protein is Dermatoxin-B1.